We begin with the raw amino-acid sequence, 271 residues long: Exosome complex component Rrp42 (271 aa).

Belongs to the RNase PH family. Rrp42 subfamily. In terms of assembly, component of the archaeal exosome complex. Forms a hexameric ring-like arrangement composed of 3 Rrp41-Rrp42 heterodimers. The hexameric ring associates with a trimer of Rrp4 and/or Csl4 subunits.

It is found in the cytoplasm. Functionally, non-catalytic component of the exosome, which is a complex involved in RNA degradation. Contributes to the structuring of the Rrp41 active site. In Methanothermobacter thermautotrophicus (strain ATCC 29096 / DSM 1053 / JCM 10044 / NBRC 100330 / Delta H) (Methanobacterium thermoautotrophicum), this protein is Exosome complex component Rrp42.